The following is a 1328-amino-acid chain: Fanconi anemia group I protein (1328 aa).

A Phosphoserine modification is found at serine 407. Lysine 523 is covalently cross-linked (Glycyl lysine isopeptide (Lys-Gly) (interchain with G-Cter in ubiquitin)). Residues serine 556 and serine 730 each carry the phosphoserine modification. Threonine 952 carries the post-translational modification Phosphothreonine. Residue serine 1121 is modified to Phosphoserine. The tract at residues glutamate 1300 to lysine 1328 is disordered. The segment covering aspartate 1301–threonine 1310 has biased composition (acidic residues).

This sequence belongs to the Fanconi anemia group I protein family. As to quaternary structure, homodimer. Part of a FANCI-FANCD2 heterodimeric complex that binds and scans dsDNA for DNA damage. Interacts with FANCL. Interacts with MTMR15/FAN1. Interacts with POLN. Interacts with UBL5; the interaction promotes FANCI homodimerization. Post-translationally, monoubiquitinated by FANCL on Lys-523 during S phase and upon genotoxic stress. Deubiquitinated by USP1 as cells enter G2/M, or once DNA repair is completed. Monoubiquitination requires the FANCA-FANCB-FANCC-FANCE-FANCF-FANCG-FANCM complex. Ubiquitination is required for binding to chromatin, DNA repair, and normal cell cycle progression. Monoubiquitination is stimulated by DNA-binding. In terms of processing, phosphorylated in response to DNA damage by ATM and/or ATR. Phosphorylation of FANCI promotes ubiquitination of FANCD2, which prevents DNA release from the FANCI-FANCD2 complex.

It is found in the nucleus. The protein resides in the cytoplasm. In terms of biological role, plays an essential role in the repair of DNA double-strand breaks by homologous recombination and in the repair of interstrand DNA cross-links (ICLs) by promoting FANCD2 monoubiquitination by FANCL and participating in recruitment to DNA repair sites. The FANCI-FANCD2 complex binds and scans double-stranded DNA (dsDNA) for DNA damage; this complex stalls at DNA junctions between double-stranded DNA and single-stranded DNA. Participates in S phase and G2 phase checkpoint activation upon DNA damage. The sequence is that of Fanconi anemia group I protein (FANCI) from Homo sapiens (Human).